The primary structure comprises 416 residues: uncharacterized protein (416 aa).

9 helical membrane-spanning segments follow: residues 5–25 (LFLISLVSFVFFIFGNWILSL), 84–104 (ISGLSAFGTTLLIYFITLKHV), 128–148 (AYVPEFTLVFFSTLGVYLFSI), 160–180 (LAFLTKGPVGVILPIGIYLLW), 192–212 (VLLFILIGFSWYFLMIYKFGF), 237–257 (PIYFYPLVILVSSILFLPVFL), 263–283 (FDKRLLPFAGWFLLVLVFYSL), 288–308 (LHHYILFSYPALSVIIGFYLT), and 312–332 (IKYAYIVGSFLLLILMFGVYI).

It belongs to the glycosyltransferase 83 family.

It is found in the cell membrane. This is an uncharacterized protein from Aquifex aeolicus (strain VF5).